We begin with the raw amino-acid sequence, 619 residues long: DNA mismatch repair protein MutL (619 aa).

The segment at 339-400 is disordered; that stretch reads AEKDDPPAPR…GGASWPHAQP (62 aa).

This sequence belongs to the DNA mismatch repair MutL/HexB family.

Its function is as follows. This protein is involved in the repair of mismatches in DNA. It is required for dam-dependent methyl-directed DNA mismatch repair. May act as a 'molecular matchmaker', a protein that promotes the formation of a stable complex between two or more DNA-binding proteins in an ATP-dependent manner without itself being part of a final effector complex. This Klebsiella pneumoniae subsp. pneumoniae (strain ATCC 700721 / MGH 78578) protein is DNA mismatch repair protein MutL.